Here is a 72-residue protein sequence, read N- to C-terminus: Osmotically-inducible lipoprotein B (72 aa).

The signal sequence occupies residues 1–23 (MFMTSKKMAAAVLAITVAMSLSA). Residue Cys24 is the site of N-palmitoyl cysteine attachment. Cys24 is lipidated: S-diacylglycerol cysteine.

It is found in the cell membrane. In terms of biological role, provides resistance to osmotic stress. May be important for stationary-phase survival. The sequence is that of Osmotically-inducible lipoprotein B (osmB) from Salmonella typhimurium (strain LT2 / SGSC1412 / ATCC 700720).